The primary structure comprises 1860 residues: Proprotein convertase subtilisin/kexin type 5 (1860 aa).

The N-terminal stretch at 1–32 is a signal peptide; it reads MGWGSRCCCPGRLDLLCVLALLGGCLLPVCRT. The propeptide occupies 33-114; the sequence is RVYTNHWAVK…QQVVKKRTKR (82 aa). Residues 115-1743 are Extracellular-facing; the sequence is DYDFSRAQST…VRPATEHFKT (1629 aa). The region spanning 134–453 is the Peptidase S8 domain; the sequence is MWYMHCSDNT…FGLMDAEAMV (320 aa). Residues aspartate 171 and histidine 212 each act as charge relay system in the active site. N-linked (GlcNAc...) asparagine glycans are attached at residues asparagine 225 and asparagine 381. The active-site Charge relay system is the serine 386. A P/Homo B domain is found at 461 to 601; that stretch reads TVPRQHVCVE…SLVLYGTSVQ (141 aa). The Cell attachment site motif lies at 519–521; it reads RGD. FU repeat units lie at residues 630 to 680, 683 to 730, 734 to 777, 779 to 824, 832 to 879, 882 to 927, 929 to 979, 982 to 1028, 1032 to 1077, 1079 to 1121, 1125 to 1168, 1177 to 1221, 1225 to 1272, 1274 to 1318, 1320 to 1363, 1365 to 1411, 1415 to 1461, 1465 to 1510, 1514 to 1559, 1563 to 1610, 1614 to 1659, and 1665 to 1712; these read EDYA…GHYH, KKRC…GSYQ, KNLC…GRYF, GQDC…SYYF, YKSC…GEYV, HGHC…WKFE, ENQC…GHYA, GNTC…GEVQ, YEEC…KTYS, EVEC…GFYG, MGEC…KTQE, LRKL…GTWP, SGSC…GSYA, DGIC…RHVA, KGVC…GFYA, SRHC…GTYY, TKEC…SEYW, APGC…GYYA, SNRC…GYYA, TGRC…HYYV, TQTC…GEYR, and KFNC…SDPP. The CRM (Cys-rich motif) stretch occupies residues 636–1727; that stretch reads CDPECSEVGC…CDCQDTTDEC (1092 aa). N-linked (GlcNAc...) asparagine glycosylation occurs at asparagine 665. N-linked (GlcNAc...) asparagine glycosylation is found at asparagine 752, asparagine 802, and asparagine 852. Residues 869–913 enclose the PLAC domain; the sequence is MGAICKDGEYVDEHGHCQTCEASCAKCQGPTQEDCTTCPMTRIFD. An N-linked (GlcNAc...) asparagine glycan is attached at asparagine 1014. Asparagine 1191 carries N-linked (GlcNAc...) asparagine glycosylation. A glycan (N-linked (GlcNAc...) asparagine) is linked at asparagine 1290. Asparagine 1497 carries N-linked (GlcNAc...) asparagine glycosylation. Residues asparagine 1685 and asparagine 1707 are each glycosylated (N-linked (GlcNAc...) asparagine). Residues 1744-1764 form a helical membrane-spanning segment; the sequence is ALFITSSMMLVLLLGAAVVVW. Residues 1765-1860 are Cytoplasmic-facing; the sequence is KKSRGRVQPA…YDDESYSYYQ (96 aa). AC stretches follow at residues 1807–1826 and 1838–1860; these read VIEY…IVYM and YGLL…SYYQ.

It belongs to the peptidase S8 family. As to expression, expressed in T-lymphocytes.

Its subcellular location is the secreted. It localises to the endomembrane system. Its function is as follows. Serine endoprotease that processes various proproteins by cleavage at paired basic amino acids, recognizing the RXXX[KR]R consensus motif. Likely functions in the constitutive and regulated secretory pathways. Plays an essential role in pregnancy establishment by proteolytic activation of a number of important factors such as BMP2, CALD1 and alpha-integrins. The polypeptide is Proprotein convertase subtilisin/kexin type 5 (PCSK5) (Homo sapiens (Human)).